A 434-amino-acid chain; its full sequence is Trigger factor (434 aa).

The PPIase FKBP-type domain maps to glycine 163 to proline 248.

It belongs to the FKBP-type PPIase family. Tig subfamily.

It localises to the cytoplasm. It carries out the reaction [protein]-peptidylproline (omega=180) = [protein]-peptidylproline (omega=0). Involved in protein export. Acts as a chaperone by maintaining the newly synthesized protein in an open conformation. Functions as a peptidyl-prolyl cis-trans isomerase. This Methylibium petroleiphilum (strain ATCC BAA-1232 / LMG 22953 / PM1) protein is Trigger factor.